The following is a 346-amino-acid chain: MSELKQKQVFKEKVMHSEEEDVSPELNTQKTFSEKETFIPVEIEEQQKETEQELQLEQVIRPKSGRKWLTTGLFATFAGLVVWQAVDSVITAIQTADWLALGWVGFITTIASFGLGALGKELWKLRKLRNHFSVQEESEALIDSQSVGKGKAFCEKVAEQSGVLAENPGFDRWKNSVNPAHSDAEILEMYDSMVVSQQDKLATKIVSQHATESAALVAVSPLAAADMLLVAWRNFKMIDNLSKVYGVELGYASRIKLLRSVFVNMAAAGASELAIDASMDLMSMDLAGKISARAGQGLGVGILTARLGLKSMALLRPLPWYPERQVKLGAIRKEVVAKVASITMKP.

The segment covering 1–17 has biased composition (basic and acidic residues); the sequence is MSELKQKQVFKEKVMHS. Positions 1 to 28 are disordered; it reads MSELKQKQVFKEKVMHSEEEDVSPELNT. 2 consecutive transmembrane segments (helical) span residues 73–93 and 98–118; these read LFAT…ITAI and WLAL…LGAL.

Belongs to the UPF0283 family.

Its subcellular location is the cell inner membrane. This is UPF0283 membrane protein VIBHAR_01918 from Vibrio campbellii (strain ATCC BAA-1116).